Consider the following 195-residue polypeptide: uncharacterized protein (195 aa).

This is an uncharacterized protein from Acidianus hospitalis (AFV-1).